We begin with the raw amino-acid sequence, 394 residues long: Probable tRNA sulfurtransferase (394 aa).

The THUMP domain maps to 61-168 (DETVATLSRI…PMINIYSEEI (108 aa)). ATP contacts are provided by residues 185–186 (LL), 210–211 (YF), Arg267, Gly289, and Gln298.

It belongs to the ThiI family.

The protein localises to the cytoplasm. It catalyses the reaction [ThiI sulfur-carrier protein]-S-sulfanyl-L-cysteine + a uridine in tRNA + 2 reduced [2Fe-2S]-[ferredoxin] + ATP + H(+) = [ThiI sulfur-carrier protein]-L-cysteine + a 4-thiouridine in tRNA + 2 oxidized [2Fe-2S]-[ferredoxin] + AMP + diphosphate. It carries out the reaction [ThiS sulfur-carrier protein]-C-terminal Gly-Gly-AMP + S-sulfanyl-L-cysteinyl-[cysteine desulfurase] + AH2 = [ThiS sulfur-carrier protein]-C-terminal-Gly-aminoethanethioate + L-cysteinyl-[cysteine desulfurase] + A + AMP + 2 H(+). The protein operates within cofactor biosynthesis; thiamine diphosphate biosynthesis. Catalyzes the ATP-dependent transfer of a sulfur to tRNA to produce 4-thiouridine in position 8 of tRNAs, which functions as a near-UV photosensor. Also catalyzes the transfer of sulfur to the sulfur carrier protein ThiS, forming ThiS-thiocarboxylate. This is a step in the synthesis of thiazole, in the thiamine biosynthesis pathway. The sulfur is donated as persulfide by IscS. This chain is Probable tRNA sulfurtransferase, found in Agathobacter rectalis (strain ATCC 33656 / DSM 3377 / JCM 17463 / KCTC 5835 / VPI 0990) (Eubacterium rectale).